The primary structure comprises 303 residues: Acetylglutamate kinase (303 aa).

Substrate contacts are provided by residues 68-69 (GG), arginine 90, and asparagine 194.

The protein belongs to the acetylglutamate kinase family. ArgB subfamily.

The protein resides in the cytoplasm. The catalysed reaction is N-acetyl-L-glutamate + ATP = N-acetyl-L-glutamyl 5-phosphate + ADP. Its pathway is amino-acid biosynthesis; L-arginine biosynthesis; N(2)-acetyl-L-ornithine from L-glutamate: step 2/4. Functionally, catalyzes the ATP-dependent phosphorylation of N-acetyl-L-glutamate. The chain is Acetylglutamate kinase from Psychrobacter arcticus (strain DSM 17307 / VKM B-2377 / 273-4).